Reading from the N-terminus, the 174-residue chain is MGVASSKILENLMEGTNFDKEEIERLRKRFMKLDKDGSGTIDKNEFLTIPGISSNPLAARLMDVFDEDGNGTIDFQEFIMGLSAFSGKTSKLDKLKFAFKIYDIDRDGYIGNGELFIVMKMMVGKNLQDEELQQIVDKTMMEADEDGDGRLNFHEFKNAVDSKSVASALTLNMI.

EF-hand domains lie at 21 to 56, 60 to 88, 90 to 125, and 131 to 166; these read EEIE…SSNP, RLMD…FSGK, SKLD…MVGK, and ELQQ…KSVA. 20 residues coordinate Ca(2+): Asp34, Asp36, Ser38, Thr40, Glu45, Asp66, Asp68, Asn70, Thr72, Glu77, Asp103, Asp105, Asp107, Tyr109, Glu114, Asp144, Asp146, Asp148, Arg150, and Glu155.

The protein belongs to the calcineurin regulatory subunit family. Composed of a catalytic subunit (A) and a regulatory subunit (B).

Functionally, regulatory subunit of calcineurin, a calcium-dependent, calmodulin stimulated protein phosphatase. Confers calcium sensitivity. This chain is Calcineurin subunit B (CNB1), found in Debaryomyces hansenii (strain ATCC 36239 / CBS 767 / BCRC 21394 / JCM 1990 / NBRC 0083 / IGC 2968) (Yeast).